Here is a 176-residue protein sequence, read N- to C-terminus: Ribosome maturation factor RimM (176 aa).

The PRC barrel domain maps to 96-176 (PADEFYWRDL…QILVDWDPDF (81 aa)).

This sequence belongs to the RimM family. In terms of assembly, binds ribosomal protein uS19.

The protein localises to the cytoplasm. In terms of biological role, an accessory protein needed during the final step in the assembly of 30S ribosomal subunit, possibly for assembly of the head region. Essential for efficient processing of 16S rRNA. May be needed both before and after RbfA during the maturation of 16S rRNA. It has affinity for free ribosomal 30S subunits but not for 70S ribosomes. The protein is Ribosome maturation factor RimM of Shewanella baltica (strain OS223).